A 360-amino-acid chain; its full sequence is Histidinol-phosphate aminotransferase (360 aa).

Lysine 218 is modified (N6-(pyridoxal phosphate)lysine).

The protein belongs to the class-II pyridoxal-phosphate-dependent aminotransferase family. Histidinol-phosphate aminotransferase subfamily. In terms of assembly, homodimer. It depends on pyridoxal 5'-phosphate as a cofactor.

It carries out the reaction L-histidinol phosphate + 2-oxoglutarate = 3-(imidazol-4-yl)-2-oxopropyl phosphate + L-glutamate. The protein operates within amino-acid biosynthesis; L-histidine biosynthesis; L-histidine from 5-phospho-alpha-D-ribose 1-diphosphate: step 7/9. The polypeptide is Histidinol-phosphate aminotransferase (Chlorobium phaeobacteroides (strain DSM 266 / SMG 266 / 2430)).